Here is a 317-residue protein sequence, read N- to C-terminus: L-lactate dehydrogenase (317 aa).

NAD(+) is bound by residues 16–17 (FV), aspartate 38, lysine 43, tyrosine 69, and 83–84 (GA). Glutamine 86 and arginine 92 together coordinate substrate. NAD(+) contacts are provided by residues serine 105, 122–124 (ATN), and serine 147. Substrate is bound at residue 124-127 (NPVD). 152-155 (DTAR) contributes to the substrate binding site. Residues arginine 157 and 169 to 172 (QNVH) each bind beta-D-fructose 1,6-bisphosphate. The active-site Proton acceptor is the histidine 179. Position 224 is a phosphotyrosine (tyrosine 224). Residue threonine 233 coordinates substrate.

Belongs to the LDH/MDH superfamily. LDH family. In terms of assembly, exists as a dimer and a tetramer (dimer of dimers). The conversion occurs via the binding of fructose 1,6-bisphosphate (FBP) to the dimer.

It is found in the cytoplasm. It catalyses the reaction (S)-lactate + NAD(+) = pyruvate + NADH + H(+). It functions in the pathway fermentation; pyruvate fermentation to lactate; (S)-lactate from pyruvate: step 1/1. With respect to regulation, allosterically activated by fructose 1,6-bisphosphate (FBP). The improvement in affinity for substrate occurs in two steps; the binding of fructose 1,6-bisphosphate (FBP) to the dimer, and the dimer to tetramer conversion. Its function is as follows. Catalyzes the conversion of lactate to pyruvate. In Geobacillus stearothermophilus (Bacillus stearothermophilus), this protein is L-lactate dehydrogenase.